Reading from the N-terminus, the 415-residue chain is Lysosome-associated membrane glycoprotein 2 (415 aa).

Residues 1-25 (MCLSPVKGAKLILIFLFLGAVQSNA) form the signal peptide. Residues 26–188 (LIVNLTDSKG…SKNEQVCEED (163 aa)) are first lumenal domain. Topologically, residues 26 to 379 (LIVNLTDSKG…AQDCSADEDN (354 aa)) are lumenal. N-linked (GlcNAc...) asparagine glycans are attached at residues Asn29, Asn45, Asn54, Asn57, Asn97, Asn115, and Asn175. Cys37 and Cys75 are disulfide-bonded. Cysteines 149 and 185 form a disulfide. Residues 189–233 (QTPTTVAPIIHTTAPSTTTTLTPTSTPTPTPTPTPTVGNYSIRNG) form a hinge region. Positions 202–213 (APSTTTTLTPTS) are enriched in low complexity. Positions 202–227 (APSTTTTLTPTSTPTPTPTPTPTVGN) are disordered. N-linked (GlcNAc...) asparagine glycans are attached at residues Asn227, Asn234, Asn247, Asn265, Asn280, Asn312, Asn317, Asn322, and Asn361. The tract at residues 234–379 (NTTCLLATMG…AQDCSADEDN (146 aa)) is second lumenal domain. Cysteines 237 and 270 form a disulfide. Cys336 and Cys373 are disulfide-bonded. Residues 380–404 (FLVPIAVGAALGGVLILVLLAYFIG) form a helical membrane-spanning segment. Over 405–415 (LKRHHTGYEQF) the chain is Cytoplasmic. The important for binding and subsequent lysosomal degradation of target proteins stretch occupies residues 406-409 (KRHH).

It belongs to the LAMP family. In terms of assembly, monomer. Forms large homooligomers. Interacts (via its cytoplasmic region) with HSPA8; HSPA8 mediates recruitment of proteins with a KFERQ motif to the surface of the lysosome for chaperone-mediated autophagy. Interacts with HSP90 in the lysosome lumen; this enhances LAMP2 stability. Interacts with MLLT11. Interacts with ABCB9. Interacts with FURIN. Interacts with CT55; this interaction may be important for LAMP2 protein stability. Interacts with TMEM175; inhibiting the proton channel activity of TMEM175. Forms a ternary complex with RAB7A and RUFY4 (via RUN domain); the interaction with RAB7A is mediated by RUFY4 (via RUN and coiled coil domains). In terms of processing, extensively N-glycosylated. Contains a minor proportion of O-linked glycans. Detected in liver and kidney (at protein level). Detected in liver and kidney.

It localises to the lysosome membrane. It is found in the endosome membrane. The protein localises to the cytoplasmic vesicle. The protein resides in the autophagosome membrane. Its subcellular location is the cell membrane. In terms of biological role, lysosomal membrane glycoprotein which plays an important role in lysosome biogenesis, lysosomal pH regulation and autophagy. Acts as an important regulator of lysosomal lumen pH regulation by acting as a direct inhibitor of the proton channel TMEM175, facilitating lysosomal acidification for optimal hydrolase activity. Plays an important role in chaperone-mediated autophagy, a process that mediates lysosomal degradation of proteins in response to various stresses and as part of the normal turnover of proteins with a long biological half-live. Functions by binding target proteins, such as GAPDH, NLRP3 and MLLT11, and targeting them for lysosomal degradation. In the chaperone-mediated autophagy, acts downstream of chaperones, such as HSPA8/HSC70, which recognize and bind substrate proteins and mediate their recruitment to lysosomes, where target proteins bind LAMP2. Plays a role in lysosomal protein degradation in response to starvation. Required for the fusion of autophagosomes with lysosomes during autophagy. Cells that lack LAMP2 express normal levels of VAMP8, but fail to accumulate STX17 on autophagosomes, which is the most likely explanation for the lack of fusion between autophagosomes and lysosomes. Required for normal degradation of the contents of autophagosomes. Required for efficient MHC class II-mediated presentation of exogenous antigens via its function in lysosomal protein degradation; antigenic peptides generated by proteases in the endosomal/lysosomal compartment are captured by nascent MHC II subunits. Is not required for efficient MHC class II-mediated presentation of endogenous antigens. The chain is Lysosome-associated membrane glycoprotein 2 (Lamp2) from Mus musculus (Mouse).